The sequence spans 446 residues: Probable arogenate/prephenate dehydrogenase (446 aa).

Positions leucine 6–serine 288 constitute a Prephenate/arogenate dehydrogenase domain.

This sequence in the N-terminal section; belongs to the prephenate/arogenate dehydrogenase family.

This chain is Probable arogenate/prephenate dehydrogenase, found in Methanocaldococcus jannaschii (strain ATCC 43067 / DSM 2661 / JAL-1 / JCM 10045 / NBRC 100440) (Methanococcus jannaschii).